The primary structure comprises 312 residues: MRVIYFGTPEFSRIILEKIYDHLNIIGIVTQPDKPKGRGKKILPSPVKQFAINKGITVYQPEKLKGNIEFFNIIKDLKPDALIVASYGKIIPEDILNIPPYGGINVHASILPKYRGAAPIERALMNCEKETGVSIMKMEKGLDTGPVYAIKKIPILPDDDKGTLSIKLANLGADLLLEVLPLIKEGKLIPVPQDESLASYAPKLTKEEEIINWNMDGEKICCQIRALSPEPGAMTFFRGKILKVFKANFEKRFFDEDVINGTIIEQDRKKGIGVKVENGILWLLELQPEGKKKMNFLEFMNGYRLNIGERFE.

Residue 109-112 (SILP) coordinates (6S)-5,6,7,8-tetrahydrofolate.

It belongs to the Fmt family.

The catalysed reaction is L-methionyl-tRNA(fMet) + (6R)-10-formyltetrahydrofolate = N-formyl-L-methionyl-tRNA(fMet) + (6S)-5,6,7,8-tetrahydrofolate + H(+). Attaches a formyl group to the free amino group of methionyl-tRNA(fMet). The formyl group appears to play a dual role in the initiator identity of N-formylmethionyl-tRNA by promoting its recognition by IF2 and preventing the misappropriation of this tRNA by the elongation apparatus. In Dictyoglomus thermophilum (strain ATCC 35947 / DSM 3960 / H-6-12), this protein is Methionyl-tRNA formyltransferase.